The sequence spans 614 residues: Maltose permease MAL61 (614 aa).

Positions 1-48 (MKGLSSLINRKKDRNDSHLDEIENGVNATEFNSIEMEEQGKKSDFDLS) are disordered. Residues 1–108 (MKGLSSLINR…AAAWSLLVST (108 aa)) lie on the Cytoplasmic side of the membrane. Over residues 38-48 (EQGKKSDFDLS) the composition is skewed to basic and acidic residues. Residues 109–129 (TLIQEGYDTAILGAFYALPVF) traverse the membrane as a helical segment. Residues 130 to 144 (QKKYGSLNSNTGDYE) are Extracellular-facing. The helical transmembrane segment at 145–165 (ISVSWQIGLCLCYMAGEIVGL) threads the bilayer. Residues 166–180 (QVTGPSVDYMGNRYT) are Cytoplasmic-facing. The helical transmembrane segment at 181 to 201 (LIMALFFLAAFIFILYFCKSL) threads the bilayer. A topological domain (extracellular) is located at residue Gly202. Residues 203–223 (MIAVGQALCGMPWGCFQCLTV) traverse the membrane as a helical segment. The Cytoplasmic segment spans residues 224–236 (SYASEICPLALRY). The chain crosses the membrane as a helical span at residues 237-257 (YLTTYSNLCWTFGQLFAAGIM). Residues 258-272 (KNSQNKYANSELGYK) lie on the Extracellular side of the membrane. A helical transmembrane segment spans residues 273–293 (LPFALQWIWPLPLAVGIFLAP). The Cytoplasmic segment spans residues 294 to 364 (ESPWWLVKKG…KDGINRRRTR (71 aa)). The helical transmembrane segment at 365-385 (IACLCWIGQCSCGASLIGYST) threads the bilayer. At 386-398 (YFYEKAGVSTDTA) the chain is on the extracellular side. A helical transmembrane segment spans residues 399-419 (FTFSIIQYCLGIAATFVSWWA). Over 420–427 (SKYCGRFD) the chain is Cytoplasmic. The helical transmembrane segment at 428–448 (LYAFGLAFQAIMFFIIGGLGC) threads the bilayer. Over 449-460 (SDTHGAKMGSGA) the chain is Extracellular. The helical transmembrane segment at 461–481 (LLMVVAFFYNLGIAPVVFCLV) threads the bilayer. At 482–493 (SEMPSSRLRTKT) the chain is on the cytoplasmic side. A helical transmembrane segment spans residues 494-514 (IILARNAYNVIQVVVTVLIMY). The Extracellular portion of the chain corresponds to 515-526 (QLNSEKWNWGAK). The helical transmembrane segment at 527-547 (SGFFWGGFCLATLAWAVVDLP) threads the bilayer. At 548 to 614 (ETAGRTFIEI…GRSTPSVVNK (67 aa)) the chain is on the cytoplasmic side. A disordered region spans residues 594-614 (KEDLETSVVDEGRSTPSVVNK).

The protein belongs to the major facilitator superfamily. Sugar transporter (TC 2.A.1.1) family.

It is found in the membrane. In terms of biological role, transporter for maltose. In Saccharomyces cerevisiae (Baker's yeast), this protein is Maltose permease MAL61 (MAL61).